The sequence spans 787 residues: LPS-assembly protein LptD (787 aa).

The disordered stretch occupies residues 1–78 (MAAGLPPLVV…AAGAAPAESG (78 aa)). Over residues 59 to 78 (LPPVGTPAEPAAGAAPAESG) the composition is skewed to low complexity.

This sequence belongs to the LptD family. Component of the lipopolysaccharide transport and assembly complex. Interacts with LptE and LptA.

In terms of biological role, together with LptE, is involved in the assembly of lipopolysaccharide (LPS) at the surface of the outer membrane. The protein is LPS-assembly protein LptD of Aromatoleum aromaticum (strain DSM 19018 / LMG 30748 / EbN1) (Azoarcus sp. (strain EbN1)).